A 354-amino-acid chain; its full sequence is GRAM domain-containing protein 2A (354 aa).

A compositionally biased stretch (polar residues) spans 1-29 (MTALSRSEATEEGGNQQMHRKTASLNSPV). Residues 1–46 (MTALSRSEATEEGGNQQMHRKTASLNSPVSCKEKPDRVEEPPDYSL) form a disordered region. Basic and acidic residues predominate over residues 31–40 (CKEKPDRVEE). Residues 72-139 (QQYHKLFKDV…VSVQMIKKHK (68 aa)) form the GRAM domain. The chain crosses the membrane as a helical span at residues 312-332 (LLKVFFVLICFLVMSSSYLAF).

The protein localises to the endoplasmic reticulum membrane. It is found in the cell membrane. In terms of biological role, participates in the organization of endoplasmic reticulum-plasma membrane contact sites (EPCS) with pleiotropic functions including STIM1 recruitment and calcium homeostasis. Constitutive tether that co-localize with ESYT2/3 tethers at endoplasmic reticulum-plasma membrane contact sites in a phosphatidylinositol lipid-dependent manner. Pre-marks the subset of phosphtidylinositol 4,5-biphosphate (PI(4,5)P2)-enriched EPCS destined for the store operated calcium entry pathway (SOCE). This is GRAM domain-containing protein 2A from Homo sapiens (Human).